We begin with the raw amino-acid sequence, 417 residues long: Calreticulin (417 aa).

Residues Met1 to Ala17 form the signal peptide. Positions Glu18–Glu197 are N-domain. Gln26 is a Ca(2+) binding site. Lys48 bears the N6-acetyllysine mark. The Ca(2+) site is built by Lys62 and Lys64. An N6-(2-hydroxyisobutyryl)lysine modification is found at Lys64. An intrachain disulfide couples Cys105 to Cys137. The an alpha-D-glucoside site is built by Tyr109, Lys111, Tyr128, and Asp135. Lys159 bears the N6-acetyllysine mark. The 1-1 repeat unit spans residues Val191–Phe202. A 4 X approximate repeats region spans residues Val191 to Glu255. Residues Ser193–Arg278 form a disordered region. The interval Asp198 to Tyr308 is P-domain. Basic and acidic residues predominate over residues Lys207–Glu251. Position 209 is an N6-acetyllysine (Lys209). 6 consecutive repeat copies span residues Asp210 to Glu221, Asp227 to Lys238, Asp244 to Glu255, Gly259 to Pro269, Gly273 to Pro283, and Gly287 to Pro297. Positions Asp237–Glu270 are interaction with PPIB. The segment covering Asp252–Trp261 has biased composition (acidic residues). Positions Gly259 to Pro297 are 3 X approximate repeats. Positions Asp309–Leu417 are C-domain. Position 317 (Asp317) interacts with an alpha-D-glucoside. Residue Asp328 coordinates Ca(2+). A glycan (N-linked (GlcNAc...) asparagine) is linked at Asn344. Residues Thr350–Leu417 are disordered. Basic and acidic residues predominate over residues Ala352–Glu379. Residues Glu380 to Val409 show a composition bias toward acidic residues. The Prevents secretion from ER signature appears at Lys414–Leu417.

This sequence belongs to the calreticulin family. As to quaternary structure, monomer. Component of an EIF2 complex at least composed of CELF1/CUGBP1, CALR, CALR3, EIF2S1, EIF2S2, HSP90B1 and HSPA5. Interacts with PDIA3/ERp57 and SPACA9. Interacts with TRIM21. Interacts with NR3C1. Interacts with PPIB. Interacts (via P-domain) with PDIA5. Interacts with GABARAP. Interacts with HLA-E-B2M and HLA-G-B2M complexes. Interacts with HLA-F. Interacts with CLCC1.

It is found in the endoplasmic reticulum lumen. Its subcellular location is the cytoplasm. The protein resides in the cytosol. It localises to the secreted. The protein localises to the extracellular space. It is found in the extracellular matrix. Its subcellular location is the cell surface. The protein resides in the sarcoplasmic reticulum lumen. It localises to the cytoplasmic vesicle. The protein localises to the secretory vesicle. It is found in the cortical granule. Its subcellular location is the cytolytic granule. Its function is as follows. Calcium-binding chaperone that promotes folding, oligomeric assembly and quality control in the endoplasmic reticulum (ER) via the calreticulin/calnexin cycle. This lectin interacts transiently with almost all of the monoglucosylated glycoproteins that are synthesized in the ER. Interacts with the DNA-binding domain of NR3C1 and mediates its nuclear export. Involved in maternal gene expression regulation. May participate in oocyte maturation via the regulation of calcium homeostasis. Present in the cortical granules of non-activated oocytes, is exocytosed during the cortical reaction in response to oocyte activation and might participate in the block to polyspermy. The polypeptide is Calreticulin (Homo sapiens (Human)).